The primary structure comprises 172 residues: NAD(P)H-quinone oxidoreductase subunit I, chloroplastic (172 aa).

4Fe-4S ferredoxin-type domains lie at 55-84 (GRIH…VDWK) and 95-124 (LNYS…MTEE). 8 residues coordinate [4Fe-4S] cluster: cysteine 64, cysteine 67, cysteine 70, cysteine 74, cysteine 104, cysteine 107, cysteine 110, and cysteine 114.

Belongs to the complex I 23 kDa subunit family. As to quaternary structure, NDH is composed of at least 16 different subunits, 5 of which are encoded in the nucleus. [4Fe-4S] cluster serves as cofactor.

Its subcellular location is the plastid. It localises to the chloroplast thylakoid membrane. The enzyme catalyses a plastoquinone + NADH + (n+1) H(+)(in) = a plastoquinol + NAD(+) + n H(+)(out). It catalyses the reaction a plastoquinone + NADPH + (n+1) H(+)(in) = a plastoquinol + NADP(+) + n H(+)(out). Functionally, NDH shuttles electrons from NAD(P)H:plastoquinone, via FMN and iron-sulfur (Fe-S) centers, to quinones in the photosynthetic chain and possibly in a chloroplast respiratory chain. The immediate electron acceptor for the enzyme in this species is believed to be plastoquinone. Couples the redox reaction to proton translocation, and thus conserves the redox energy in a proton gradient. The chain is NAD(P)H-quinone oxidoreductase subunit I, chloroplastic from Crucihimalaya wallichii (Rock-cress).